The chain runs to 587 residues: MTLHTKTSGVTLLHQIQGTELETLSRPQLKIPLERSLSDMYVETNKTGVFNYPEGATYDFGTTAPVYSSTTLSYAPTSESFGSSSLAGFHSLNSVPPSPVVFLQTAPHWSPFIHHHSQQVPYYLENDQGSFGMREAAPPAFYRPNSDNRRHSIRERMSSANEKGSLSMESTKETRYCAVCNDYASGYHYGVWSCEGCKAFFKRSIQGHNDYMCPATNQCTIDKNRRKSCQACRLRKCYEVGMMKGGIRKDRRGGRVMKQKRQREEQDSRNGEASSTELRAPTLWASPLVVKHNKKNSPALSLTAEQMVSALLEAEPPLVYSEYDPNRPFNEASMMTLLTNLADRELVHMINWAKRVPGFVDLTLHDQVHLLECAWLEILMIGLVWRSMEHPGKLLFAPNLLLDRNQGKCVEGMVEIFDMLLATAARFRMMNLQGEEFVCLKSIILLNSGVYTFLSSTLKSLEEKDYIHRVLDKITDTLIHLMAKSGLSLQQQHRRLAQLLLILSHIRHMSNKGMEHLYNMKCKNVVPLYDLLLEMLDAHRLHAPAARSAAPMEEENRSQLTTASASSHSLQSFYINSKEEENMQNTL.

The interval 1 to 176 (MTLHTKTSGV…SMESTKETRY (176 aa)) is modulating (transactivation AF-1). 2 consecutive NR C4-type zinc fingers follow at residues 177-197 (CAVCNDYASGYHYGVWSCEGC) and 213-237 (CPATNQCTIDKNRRKSCQACRLRKC). A DNA-binding region (nuclear receptor) is located at residues 177–242 (CAVCNDYASG…RLRKCYEVGM (66 aa)). The tract at residues 243–302 (MKGGIRKDRRGGRVMKQKRQREEQDSRNGEASSTELRAPTLWASPLVVKHNKKNSPALSL) is hinge. Residues 248 to 277 (RKDRRGGRVMKQKRQREEQDSRNGEASSTE) are disordered. A compositionally biased stretch (basic residues) spans 249 to 261 (KDRRGGRVMKQKR). Residues 303–539 (TAEQMVSALL…DLLLEMLDAH (237 aa)) form the NR LBD domain. The transactivation AF-2 stretch occupies residues 303–587 (TAEQMVSALL…KEEENMQNTL (285 aa)).

This sequence belongs to the nuclear hormone receptor family. NR3 subfamily. In terms of assembly, binds DNA as a homodimer. Can form a heterodimer with ER-beta.

Its subcellular location is the nucleus. In terms of biological role, the steroid hormones and their receptors are involved in the regulation of eukaryotic gene expression and affect cellular proliferation and differentiation in target tissues. The chain is Estrogen receptor (ESR1) from Taeniopygia guttata (Zebra finch).